An 84-amino-acid chain; its full sequence is U4-theraphotoxin-Hhn1a (84 aa).

The N-terminal stretch at 1–22 (MKVTLIAILTCAAVLVLHTTAA) is a signal peptide. Positions 23–47 (EELEESQLMEVGMPDTELEAVDEER) are excised as a propeptide. 3 disulfides stabilise this stretch: Cys-51–Cys-65, Cys-55–Cys-76, and Cys-70–Cys-81.

This sequence belongs to the neurotoxin 12 (Hwtx-2) family. 02 (Hwtx-2) subfamily. As to expression, expressed by the venom gland.

The protein localises to the secreted. In terms of biological role, postsynaptic neurotoxin. The chain is U4-theraphotoxin-Hhn1a from Cyriopagopus hainanus (Chinese bird spider).